We begin with the raw amino-acid sequence, 442 residues long: 3-isopropylmalate dehydratase large subunit (442 aa).

Residues Cys347, Cys407, and Cys410 each contribute to the [4Fe-4S] cluster site.

It belongs to the aconitase/IPM isomerase family. LeuC type 1 subfamily. Heterodimer of LeuC and LeuD. Requires [4Fe-4S] cluster as cofactor.

It catalyses the reaction (2R,3S)-3-isopropylmalate = (2S)-2-isopropylmalate. Its pathway is amino-acid biosynthesis; L-leucine biosynthesis; L-leucine from 3-methyl-2-oxobutanoate: step 2/4. Its function is as follows. Catalyzes the isomerization between 2-isopropylmalate and 3-isopropylmalate, via the formation of 2-isopropylmaleate. The chain is 3-isopropylmalate dehydratase large subunit from Buchnera aphidicola subsp. Uroleucon helianthicola.